Reading from the N-terminus, the 198-residue chain is dTTP/UTP pyrophosphatase (198 aa).

The Proton acceptor role is filled by aspartate 69.

The protein belongs to the Maf family. YhdE subfamily. A divalent metal cation serves as cofactor.

It is found in the cytoplasm. The catalysed reaction is dTTP + H2O = dTMP + diphosphate + H(+). It carries out the reaction UTP + H2O = UMP + diphosphate + H(+). In terms of biological role, nucleoside triphosphate pyrophosphatase that hydrolyzes dTTP and UTP. May have a dual role in cell division arrest and in preventing the incorporation of modified nucleotides into cellular nucleic acids. In Idiomarina loihiensis (strain ATCC BAA-735 / DSM 15497 / L2-TR), this protein is dTTP/UTP pyrophosphatase.